The following is a 143-amino-acid chain: Large-conductance mechanosensitive channel (143 aa).

The next 2 helical transmembrane spans lie at 10 to 30 (FAVKGNVMDLAVGVIIGGAFS) and 89 to 109 (GSFITVLINFIILAFIIFLMV).

This sequence belongs to the MscL family. In terms of assembly, homopentamer.

The protein resides in the cell inner membrane. Its function is as follows. Channel that opens in response to stretch forces in the membrane lipid bilayer. May participate in the regulation of osmotic pressure changes within the cell. The polypeptide is Large-conductance mechanosensitive channel (Burkholderia multivorans (strain ATCC 17616 / 249)).